Reading from the N-terminus, the 709-residue chain is DCC-interacting protein 13-alpha (709 aa).

The segment at 1 to 428 is required for RAB5A binding; sequence MPGIDKLPIE…RPPTARTSSS (428 aa). The region spanning 3-268 is the BAR domain; the sequence is GIDKLPIEET…DPLYVPDPDP (266 aa). Residues 215 to 259 are a coiled coil; it reads SENLNEQLEEFLANIGTSVQNVRREMDSDIETMQQTIEDLEVASD. The PH domain occupies 277–375; that stretch reads LTRKAGYLNA…WICTINNISK (99 aa). Disordered regions lie at residues 397-434, 467-491, and 645-709; these read AVTP…LGSE, GQAK…STKS, and VKEK…ESEA. At Thr399 the chain carries Phosphothreonine. Position 401 is a phosphoserine (Ser401). The short motif at 403-414 is the F&amp;H element; the sequence is SFQQRHESLRPA. A Phosphoserine; by PKA modification is found at Ser410. The region spanning 496–656 is the PID domain; the sequence is SILHQLFIVR…EKQQKELNKQ (161 aa). Positions 621–673 form a coiled coil; the sequence is LAKQIALHAELDRRASEKQKEIERVKEKQQKELNKQKQIEKDLEEQSRLIAAS. The segment covering 645 to 667 has biased composition (basic and acidic residues); that stretch reads VKEKQQKELNKQKQIEKDLEEQS. Polar residues predominate over residues 674-693; it reads SRPNQASSEGQFVVLSSSQS. Phosphoserine occurs at positions 693 and 696. The span at 700–709 shows a compositional bias: basic and acidic residues; it reads EGGKKRESEA.

Homodimer. Binds RAB5A/Rab5 through an N-terminal domain. This interaction is essential for its recruitment to endosomal membranes as well as its role in cell proliferation. Binds DCC and the catalytic domain of the inactive form of AKT2 through its PID domain. Binds PIK3CA and subunits of the NuRD/MeCP1 complex. Interacts with OCRL and INPP5B. Interacts with NTRK2. Interacts with APPL2; interaction is independent of follicle stimulating hormone stimulation; interaction is decreased by adiponectin in a time-dependent manner. Forms a complex with APPL2 and RUVBL2. Forms a complex comprising APPL2, RUVBL2, CTNNB1, HDAC1 and HDAC2; interaction reduces interaction between CTNNB1, HDAC1, HDAC2 and RUVBL2 leading to the decrease of deacetylase activity of this complex; affects the recruitment of repressive complexes to the Wnt target genes. Interacts with ANXA2. Interacts with TGFBR1; interaction is TGF beta dependent; mediates trafficking of the TGFBR1 from the endosomes to the nucleus via microtubules in a TRAF6-dependent manner. Interacts with PRKCZ. Interacts with PIK3R1 and APPL2. Interacts with ADIPOR1; ADIPOQ enhances this interaction; inhibites adiponectin-stimulated binding of APPL2 to ADIPOR1. In terms of processing, phosphorylation at Ser-410 by PKA severely impairs binding to OCRL. In terms of tissue distribution, high levels in heart, ovary, pancreas and skeletal muscle.

It is found in the early endosome membrane. The protein resides in the nucleus. The protein localises to the cytoplasm. It localises to the endosome. Its subcellular location is the cell projection. It is found in the ruffle. The protein resides in the cytoplasmic vesicle. The protein localises to the phagosome. Multifunctional adapter protein that binds to various membrane receptors, nuclear factors and signaling proteins to regulate many processes, such as cell proliferation, immune response, endosomal trafficking and cell metabolism. Regulates signaling pathway leading to cell proliferation through interaction with RAB5A and subunits of the NuRD/MeCP1 complex. Functions as a positive regulator of innate immune response via activation of AKT1 signaling pathway by forming a complex with APPL1 and PIK3R1. Inhibits Fc-gamma receptor-mediated phagocytosis through PI3K/Akt signaling in macrophages. Regulates TLR4 signaling in activated macrophages. Involved in trafficking of the TGFBR1 from the endosomes to the nucleus via microtubules in a TRAF6-dependent manner. Plays a role in cell metabolism by regulating adiponecting and insulin signaling pathways. Required for fibroblast migration through HGF cell signaling. Positive regulator of beta-catenin/TCF-dependent transcription through direct interaction with RUVBL2/reptin resulting in the relief of RUVBL2-mediated repression of beta-catenin/TCF target genes by modulating the interactions within the beta-catenin-reptin-HDAC complex. The polypeptide is DCC-interacting protein 13-alpha (Homo sapiens (Human)).